The primary structure comprises 159 residues: Phosphopantetheine adenylyltransferase (159 aa).

Threonine 10 provides a ligand contact to substrate. Residues 10–11 (TF) and histidine 18 contribute to the ATP site. Lysine 42, methionine 74, and arginine 88 together coordinate substrate. Residues 89 to 91 (GLR), glutamate 99, and 124 to 130 (WSFISSS) each bind ATP.

It belongs to the bacterial CoaD family. In terms of assembly, homohexamer. Mg(2+) is required as a cofactor.

The protein localises to the cytoplasm. It catalyses the reaction (R)-4'-phosphopantetheine + ATP + H(+) = 3'-dephospho-CoA + diphosphate. The protein operates within cofactor biosynthesis; coenzyme A biosynthesis; CoA from (R)-pantothenate: step 4/5. Functionally, reversibly transfers an adenylyl group from ATP to 4'-phosphopantetheine, yielding dephospho-CoA (dPCoA) and pyrophosphate. The sequence is that of Phosphopantetheine adenylyltransferase from Enterobacter sp. (strain 638).